A 235-amino-acid polypeptide reads, in one-letter code: 2,3,4,5-tetrahydropyridine-2,6-dicarboxylate N-acetyltransferase (235 aa).

The protein belongs to the transferase hexapeptide repeat family. DapH subfamily.

It catalyses the reaction (S)-2,3,4,5-tetrahydrodipicolinate + acetyl-CoA + H2O = L-2-acetamido-6-oxoheptanedioate + CoA. The protein operates within amino-acid biosynthesis; L-lysine biosynthesis via DAP pathway; LL-2,6-diaminopimelate from (S)-tetrahydrodipicolinate (acetylase route): step 1/3. Functionally, catalyzes the transfer of an acetyl group from acetyl-CoA to tetrahydrodipicolinate. This chain is 2,3,4,5-tetrahydropyridine-2,6-dicarboxylate N-acetyltransferase, found in Exiguobacterium sibiricum (strain DSM 17290 / CCUG 55495 / CIP 109462 / JCM 13490 / 255-15).